The sequence spans 502 residues: Bone morphogenetic protein receptor type-1B (502 aa).

The segment covering 1–10 (MPLLSSSKLS) has biased composition (polar residues). The first 13 residues, 1–13 (MPLLSSSKLSMES), serve as a signal peptide directing secretion. The tract at residues 1-27 (MPLLSSSKLSMESRKEDSEGTAPAPPQ) is disordered. Residues 14-126 (RKEDSEGTAP…DFAEGNIHHK (113 aa)) are Extracellular-facing. 5 cysteine pairs are disulfide-bonded: cysteine 32/cysteine 53, cysteine 34/cysteine 38, cysteine 47/cysteine 71, cysteine 81/cysteine 95, and cysteine 96/cysteine 102. Asparagine 44 carries N-linked (GlcNAc...) asparagine glycosylation. Residues 127 to 148 (ALLISVTVCSILLVLIIIFCYF) form a helical membrane-spanning segment. The Cytoplasmic portion of the chain corresponds to 149-502 (RYKRQEARPR…KMSESQDIKL (354 aa)). The GS domain occupies 174–203 (ESLKDLIEQSQSSGSGSGLPLLVQRTIAKQ). The Protein kinase domain maps to 204 to 494 (IQMVKQIGKG…LRVKKTLAKM (291 aa)). ATP contacts are provided by residues 210–218 (IGKGRYGEV) and lysine 231. The active-site Proton acceptor is aspartate 332.

It belongs to the protein kinase superfamily. TKL Ser/Thr protein kinase family. TGFB receptor subfamily. Requires Mg(2+) as cofactor. Mn(2+) serves as cofactor. Post-translationally, autophosphorylated.

The protein localises to the cell membrane. It carries out the reaction L-threonyl-[receptor-protein] + ATP = O-phospho-L-threonyl-[receptor-protein] + ADP + H(+). It catalyses the reaction L-seryl-[receptor-protein] + ATP = O-phospho-L-seryl-[receptor-protein] + ADP + H(+). Its function is as follows. On ligand binding, forms a receptor complex consisting of two type II and two type I transmembrane serine/threonine kinases. Type II receptors phosphorylate and activate type I receptors which autophosphorylate, then bind and activate SMAD transcription. Positively regulates chondrocyte differentiation. This chain is Bone morphogenetic protein receptor type-1B (BMPR1B), found in Gallus gallus (Chicken).